We begin with the raw amino-acid sequence, 502 residues long: Cobyric acid synthase (502 aa).

Residues 260-433 enclose the GATase cobBQ-type domain; the sequence is ILRVAVCAIP…WHGSLESDGF (174 aa). Cys-341 acts as the Nucleophile in catalysis. Residue His-425 is part of the active site.

It belongs to the CobB/CobQ family. CobQ subfamily.

It participates in cofactor biosynthesis; adenosylcobalamin biosynthesis. In terms of biological role, catalyzes amidations at positions B, D, E, and G on adenosylcobyrinic A,C-diamide. NH(2) groups are provided by glutamine, and one molecule of ATP is hydrogenolyzed for each amidation. This Streptomyces avermitilis (strain ATCC 31267 / DSM 46492 / JCM 5070 / NBRC 14893 / NCIMB 12804 / NRRL 8165 / MA-4680) protein is Cobyric acid synthase.